The sequence spans 30 residues: Protamine-YII (30 aa).

The disordered stretch occupies residues 1-30 (PRRRTRRASRPVRRRRPRRVSRRRRARRRR).

In terms of tissue distribution, testis.

Its subcellular location is the nucleus. It is found in the chromosome. Functionally, protamines substitute for histones in the chromatin of sperm during the haploid phase of spermatogenesis. They compact sperm DNA into a highly condensed, stable and inactive complex. This chain is Protamine-YII, found in Clupea harengus (Atlantic herring).